Consider the following 154-residue polypeptide: Large ribosomal subunit protein uL11 (154 aa).

It belongs to the universal ribosomal protein uL11 family. As to quaternary structure, part of the ribosomal stalk of the 50S ribosomal subunit. Interacts with L10 and the large rRNA to form the base of the stalk. L10 forms an elongated spine to which L12 dimers bind in a sequential fashion forming a multimeric L10(L12)X complex. In terms of processing, one or more lysine residues are methylated.

Functionally, forms part of the ribosomal stalk which helps the ribosome interact with GTP-bound translation factors. This chain is Large ribosomal subunit protein uL11, found in Leuconostoc mesenteroides subsp. mesenteroides (strain ATCC 8293 / DSM 20343 / BCRC 11652 / CCM 1803 / JCM 6124 / NCDO 523 / NBRC 100496 / NCIMB 8023 / NCTC 12954 / NRRL B-1118 / 37Y).